The primary structure comprises 278 residues: MCPPQARAEVGSAMTEKTEMVCASSPAPAPPSKPASPGPLSTEEVDHRNTCTPWLPPGVPVINLGHTRPIGAAMPTTELSAFRPSLLQLTALGRAPPTLAVHYHPHPFLNSVYIGPAGPFSIFPNSRLKRRPSHSELDLADGHQPQKVARRVFTNSRERWRQQHVNGAFAELRKLLPTHPPDRKLSKNEVLRLAMKYIGFLVRLLRDQTAVLTSGPSAPGSRKPPARRGVEGSARFGAGHRVEAARSQPVLPGDCDGDPNGSVRPIKLEQTSLSPEVR.

A disordered region spans residues 1–46; it reads MCPPQARAEVGSAMTEKTEMVCASSPAPAPPSKPASPGPLSTEEVD. The span at 27 to 37 shows a compositional bias: pro residues; sequence APAPPSKPASP. The bHLH domain occupies 149-201; sequence ARRVFTNSRERWRQQHVNGAFAELRKLLPTHPPDRKLSKNEVLRLAMKYIGFL. The tract at residues 212–278 is disordered; it reads LTSGPSAPGS…EQTSLSPEVR (67 aa). Residues 269–278 show a composition bias toward polar residues; that stretch reads EQTSLSPEVR. A Phosphoserine modification is found at serine 274.

Efficient DNA binding requires dimerization with another bHLH protein.

The protein resides in the nucleus. The polypeptide is Protein lyl-1 (Lyl1) (Mus musculus (Mouse)).